Reading from the N-terminus, the 120-residue chain is V-type proton ATPase subunit F (120 aa).

This sequence belongs to the V-ATPase F subunit family. As to quaternary structure, V-ATPase is a heteromultimeric enzyme composed of a peripheral catalytic V1 complex (components A to H) attached to an integral membrane V0 proton pore complex (components: a, c, c', c'', d, e, f and VOA1).

Its subcellular location is the vacuole membrane. In terms of biological role, subunit of the V1 complex of vacuolar(H+)-ATPase (V-ATPase), a multisubunit enzyme composed of a peripheral complex (V1) that hydrolyzes ATP and a membrane integral complex (V0) that translocates protons. V-ATPase is responsible for acidifying and maintaining the pH of intracellular compartments. In Schizosaccharomyces pombe (strain 972 / ATCC 24843) (Fission yeast), this protein is V-type proton ATPase subunit F.